The following is a 449-amino-acid chain: MREVISIHVGQGGIQVGNACWELFCLEHGIQPDGQMPSDKTIGGGDDAFNTFFSETGAGKHVPRAVFLDLEPTVIDEVRTGTYRQLFHPEQLISGKEDAANNFARGHYTIGKEIVDLCLDRIRKLADNCTGLQGFLVFNSVGGGTGSGLGSLLLERLSVDYGKKSKLGFTIYPSPQVSTAVVEPYNSILSTHSLLEHTDVAVMLDNEAIYDICRRNLDIERPTYTNLNRLIAQVISSLTASLRFDGALNVDITEFQTNLVPYPRIHFMLSSYAPIISAEKAYHEQLSVAEITNSAFEPANMMAKCDPRHGKYMACSMMYRGDVVPKDVNASIATIKTKRTIQFVDWCPTGFKVGINYQPPTVVPGGDLAKVMRAVCMISNSTAIAEVFSRLDHKFDLMYAKRAFVHWYVGEGMEEGEFSEAREDLAALEKDYEEVGIETAEGEGEEEGY.

Gln-11 is a GTP binding site. Residue Lys-40 is modified to N6-acetyllysine. GTP is bound by residues Glu-71, Ser-140, Gly-144, Thr-145, Thr-179, Asn-206, and Asn-228. Glu-71 lines the Mg(2+) pocket. The active site involves Glu-254.

Belongs to the tubulin family. In terms of assembly, dimer of alpha and beta chains. A typical microtubule is a hollow water-filled tube with an outer diameter of 25 nm and an inner diameter of 15 nM. Alpha-beta heterodimers associate head-to-tail to form protofilaments running lengthwise along the microtubule wall with the beta-tubulin subunit facing the microtubule plus end conferring a structural polarity. Microtubules usually have 13 protofilaments but different protofilament numbers can be found in some organisms and specialized cells. Requires Mg(2+) as cofactor. In terms of processing, undergoes a tyrosination/detyrosination cycle, the cyclic removal and re-addition of a C-terminal tyrosine residue by the enzymes tubulin tyrosine carboxypeptidase (TTCP) and tubulin tyrosine ligase (TTL), respectively. Post-translationally, some glutamate residues at the C-terminus are either polyglutamylated or polyglycylated. These 2 modifications occur exclusively on glutamate residues and result in either polyglutamate or polyglycine chains on the gamma-carboxyl group. Both modifications can coexist on the same protein on adjacent residues, and lowering polyglycylation levels increases polyglutamylation, and reciprocally. The precise function of such modifications is still unclear but they regulate the assembly and dynamics of axonemal microtubules. Acetylation of alpha chains at Lys-40 stabilizes microtubules and affects affinity and processivity of microtubule motors. This modification has a role in multiple cellular functions, ranging from cell motility, cell cycle progression or cell differentiation to intracellular trafficking and signaling.

Its subcellular location is the cytoplasm. The protein localises to the cytoskeleton. It catalyses the reaction GTP + H2O = GDP + phosphate + H(+). Functionally, tubulin is the major constituent of microtubules, a cylinder consisting of laterally associated linear protofilaments composed of alpha- and beta-tubulin heterodimers. Microtubules grow by the addition of GTP-tubulin dimers to the microtubule end, where a stabilizing cap forms. Below the cap, tubulin dimers are in GDP-bound state, owing to GTPase activity of alpha-tubulin. The polypeptide is Tubulin alpha chain (Tetrahymena thermophila).